A 63-amino-acid chain; its full sequence is Bowman-birk type proteinase inhibitor 2 (63 aa).

7 cysteine pairs are disulfide-bonded: C7–C61, C8–C23, C11–C57, C13–C21, C31–C38, C35–C50, and C40–C48.

The protein belongs to the Bowman-Birk serine protease inhibitor family. As to quaternary structure, exists as a dimer in its native form.

Inhibits trypsin, chymotrypsin, plasmin and factor XIIa. Does not inhibit factor Xa, thrombin, human plasma kallikrein, porcine pancreatic kallikrein and human urinary kallikrein. The sequence is that of Bowman-birk type proteinase inhibitor 2 from Amburana cearensis (Cerejeira).